We begin with the raw amino-acid sequence, 956 residues long: MAM domain-containing glycosylphosphatidylinositol anchor protein 2 (956 aa).

A signal peptide spans 1-25 (MDLLYGLVWLLTVLLEGISGQGVYA). 2 Ig-like domains span residues 27 to 127 (PTVR…IRVD) and 134 to 232 (PVVT…KMVS). 2 cysteine pairs are disulfide-bonded: Cys-62–Cys-110 and Cys-159–Cys-216. 3 N-linked (GlcNAc...) asparagine glycosylation sites follow: Asn-92, Asn-213, and Asn-237. 4 consecutive Ig-like domains span residues 242 to 328 (PSIK…NIIV), 340 to 436 (PDPY…VNIS), 442 to 533 (PNLT…ALVQ), and 540 to 627 (PAVE…FLVT). 2 cysteine pairs are disulfide-bonded: Cys-264–Cys-310 and Cys-359–Cys-417. Residues Asn-434, Asn-443, Asn-504, Asn-610, and Asn-703 are each glycosylated (N-linked (GlcNAc...) asparagine). Intrachain disulfides connect Cys-465-Cys-515 and Cys-561-Cys-611. The 102-residue stretch at 638-739 (DTYNPVWQNR…IRVIKYSAPV (102 aa)) folds into the Fibronectin type-III domain. An MAM domain is found at 746–921 (FHCGFEDGNI…VSIAEGECAK (176 aa)). Asp-931 is lipidated: GPI-anchor amidated aspartate. Positions 932–956 (GAVGILVHIWLFPIIVLISILSPRR) are cleaved as a propeptide — removed in mature form.

Interacts (through the Ig-like domains) with NLGN2. Detected in Leydig cells, syncytiotrophoblast, duodenal villi epithelial cells and neutrophils from kidney and cutaneous squamous cell carcinoma (at protein level).

It localises to the cell membrane. In terms of biological role, may be involved in cell-cell interactions. The polypeptide is MAM domain-containing glycosylphosphatidylinositol anchor protein 2 (MDGA2) (Homo sapiens (Human)).